The following is a 60-amino-acid chain: Large ribosomal subunit protein bL32 (60 aa).

The tract at residues 1-60 is disordered; the sequence is MAVQQNKKSPSKRGMHRSHNALTVPGIAVEPTTGETHLRHHISPNGFYRGRQVLKNKSEA. Over residues 9–19 the composition is skewed to basic residues; the sequence is SPSKRGMHRSH.

This sequence belongs to the bacterial ribosomal protein bL32 family.

The chain is Large ribosomal subunit protein bL32 from Paracidovorax citrulli (strain AAC00-1) (Acidovorax citrulli).